A 332-amino-acid chain; its full sequence is Centrosomal AT-AC splicing factor (332 aa).

Residues 1–169 (MAPAQRCPLC…QSRQEVVRSV (169 aa)) form a required for centrosome location region. Residue K31 is modified to N6-acetyllysine; by NAT10. Residues 137–168 (LDSYEEKEDKVIKEMAAQIREVEQSRQEVVRS) adopt a coiled-coil conformation. Residues 169 to 213 (VLEPQAVPDPEEGSSAPRSWKGMNSQVASSLQQPSNLDLPPAPEL) form a disordered region. Residues 190–204 (GMNSQVASSLQQPSN) are compositionally biased toward polar residues.

Interacts with SASS6; the interaction increases with CENATAC acetylation. Post-translationally, acetylated. Acetylation oscillates throughout the cell cycle, and the acetylation state at Lys-31 is regulated by the deacetylase SIRT1 and the acetyltransferase NAT10. Deacetylated CENATAC is responsible for its centrosome targeting, and acetylated CENATAC promotes SASS6 degradation by enhancing the binding affinity of SASS6 for APC/C E3 ubiquitin-protein ligase complex/FZR1.

The protein resides in the cytoplasm. It localises to the cytoskeleton. It is found in the microtubule organizing center. Its subcellular location is the centrosome. In terms of biological role, component of the minor spliceosome that promotes splicing of a specific, rare minor intron subtype. Negative regulator of centrosome duplication. Constrains centriole number by modulating the degradation of the centrosome-duplication-associated protein SASS6 in an acetylation-dependent manner. SIRT1 deacetylates CENATAC in G1 phase, allowing for SASS6 accumulation on the centrosome and subsequent procentriole assembly. The CENATAC acetylation level is restored in mitosis by NAT10, promoting SASS6 proteasome degradation by facilitating SASS6 binding to APC/C E3 ubiquitin-protein ligase complex/FZR1. The sequence is that of Centrosomal AT-AC splicing factor from Homo sapiens (Human).